Here is a 556-residue protein sequence, read N- to C-terminus: Dihydroxy-acid dehydratase (556 aa).

Residue Asp-78 coordinates Mg(2+). Residue Cys-119 participates in [2Fe-2S] cluster binding. Asp-120 and Lys-121 together coordinate Mg(2+). Lys-121 carries the N6-carboxylysine modification. Cys-195 provides a ligand contact to [2Fe-2S] cluster. Glu-446 is a binding site for Mg(2+). The active-site Proton acceptor is the Ser-472.

It belongs to the IlvD/Edd family. In terms of assembly, homodimer. It depends on [2Fe-2S] cluster as a cofactor. Requires Mg(2+) as cofactor.

The catalysed reaction is (2R)-2,3-dihydroxy-3-methylbutanoate = 3-methyl-2-oxobutanoate + H2O. It catalyses the reaction (2R,3R)-2,3-dihydroxy-3-methylpentanoate = (S)-3-methyl-2-oxopentanoate + H2O. Its pathway is amino-acid biosynthesis; L-isoleucine biosynthesis; L-isoleucine from 2-oxobutanoate: step 3/4. It functions in the pathway amino-acid biosynthesis; L-valine biosynthesis; L-valine from pyruvate: step 3/4. In terms of biological role, functions in the biosynthesis of branched-chain amino acids. Catalyzes the dehydration of (2R,3R)-2,3-dihydroxy-3-methylpentanoate (2,3-dihydroxy-3-methylvalerate) into 2-oxo-3-methylpentanoate (2-oxo-3-methylvalerate) and of (2R)-2,3-dihydroxy-3-methylbutanoate (2,3-dihydroxyisovalerate) into 2-oxo-3-methylbutanoate (2-oxoisovalerate), the penultimate precursor to L-isoleucine and L-valine, respectively. This Desulfatibacillum aliphaticivorans protein is Dihydroxy-acid dehydratase.